A 303-amino-acid polypeptide reads, in one-letter code: Putative S-adenosyl-L-methionine-dependent methyltransferase MAV_4435 (303 aa).

S-adenosyl-L-methionine is bound by residues D129 and D158 to L159.

This sequence belongs to the UPF0677 family.

Exhibits S-adenosyl-L-methionine-dependent methyltransferase activity. The sequence is that of Putative S-adenosyl-L-methionine-dependent methyltransferase MAV_4435 from Mycobacterium avium (strain 104).